The following is a 499-amino-acid chain: Pentatricopeptide repeat-containing protein PPR5, chloroplastic (499 aa).

Residues 1-12 (MLACPSTSSPWP) are compositionally biased toward low complexity. The tract at residues 1 to 28 (MLACPSTSSPWPQRQPPSPCPGGGGGAT) is disordered. A chloroplast-targeting transit peptide spans 1–45 (MLACPSTSSPWPQRQPPSPCPGGGGGATRHVALAARSKRRGAGPA). PPR repeat units lie at residues 123 to 157 (DNGIYSKLISVMGRKGQIRMAMWLFSQMRNSGCKP), 158 to 193 (DTSVYNSLIGAHLHSRDKTKALAKALGYFEKMKCIE), 198 to 232 (TIVTYNILLRAFAQAGDTKQVDMLFKDLDESVVSP), 233 to 267 (DVYTYNGVLDAYGKNGMIKEMESVLVRMKSTQCRP), 268 to 302 (DVITFNILIDSYGRKQTFDKMEQVFKSLLRSKERP), 303 to 337 (THPTFNSMITNYGRARLREKAESVVEKMEELGFKP), 338 to 372 (NYVTQECLIIMYAHCDCVSKARQVFDELVTSQTKV), 373 to 407 (HLSSLNSMLEAYCMNGLHTEADRLLDTALQQCVVP), and 408 to 442 (NGSTYKLLYKAYTKANDKLLVQKLLKRMNKQGIVP). The interval 458-499 (DRKPRTSPGINSASKPSTDSAGDSETATSDKPEVSVWHVAAT) is disordered. The span at 465–484 (PGINSASKPSTDSAGDSETA) shows a compositional bias: polar residues.

Belongs to the PPR family. P subfamily.

The protein localises to the plastid. Its subcellular location is the chloroplast. In terms of biological role, involved in the biogenesis of the plastid translation machinery by promoting the splicing of group II introns in chloroplasts. Stabilizes the chloroplast trnG pre-RNA by directly binding to a group II intron, where it protects an endonuclease-sensitive site and stimulates splicing. Binds specific sites within group II intron trnG pre-RNA. Binds with high affinity to the 5'-UTR of the chloroplastic petA mRNA. The polypeptide is Pentatricopeptide repeat-containing protein PPR5, chloroplastic (Zea mays (Maize)).